The following is a 215-amino-acid chain: Glutathione S-transferase stcT (215 aa).

The GST N-terminal domain occupies 2–82 (PFGTLYTRPF…YDSNTTLLGT (81 aa)). Positions 52 and 66 each coordinate glutathione. Lys-52 serves as a coordination point for substrate. Positions 83–211 (TGQEYASIIR…PVLAEYEMPI (129 aa)) constitute a GST C-terminal domain.

Belongs to the GST superfamily. The cofactor is glutathione.

It participates in mycotoxin biosynthesis; sterigmatocystin biosynthesis. Functionally, glutathione S-transferase; part of the gene cluster that mediates the biosynthesis of sterigmatocystin (ST), a polyketide-derived furanocoumarin which is part of the most toxic and carcinogenic compounds among the known mycotoxins. The first step in the biosynthesis of sterigmatocystin is the production of hexanoate by the fatty acid synthase (FAS) units stcJ and stcK. The polyketide backbone is assembled by the non-reducing polyketide synthase stcA by condensation of the starter hexanoyl-CoA and 7 malonyl-CoA extender units followed by cyclization and release of norsolorinic acid. Norsolorinic acid is the first stable intermediate in the biosynthesis of sterigmatocystin and is converted into averantin (AVN) by the ketoreductase stcE which reduces the hexanoate ketone to an alcohol. Averantin is then oxidized into 5'-hydroxyaverantin (HAVN) by the cytochrome P450 monooxygenase stcF. 5'-hydroxyaverantin is further converted to 5'-oxyaverantin (OAVN) by the 5'-hydroxyaverantin dehydrogenase stcG. The next step is the conversion of OAVN into averufin (AVF) which is catalyzed by a yet to be identified enzyme. The cytochrome P450 monooxygenase stcB and the flavin-binding monooxygenase stcW are both required for the conversion of averufin to 1-hydroxyversicolorone. The esterase stcI probably catalyzes the formation of versiconal hemiacetal acetate from 1-hydroxyversicolorone. The oxydoreductase stcN then probably catalyzes the biosynthetic step from versiconal to versicolorin B (VERB). The next step is performed by the versicolorin B desaturase stcL to produce versicolorin A (VERA). The ketoreductase stcU and the cytochrome P450 monooxygenase stcS are involved in the conversion of versicolorin A to demethylsterigmatocystin. The Baeyer-Villiger oxidas stcQ and the reductase stcR might be involved in the biosynthetic step from versicolorin A to demethylsterigmatocystin. The final step in the biosynthesis of sterigmatocystin is the methylation of demethylsterigmatocystin catalyzed by the methyltransferase stcP. In Emericella nidulans (strain FGSC A4 / ATCC 38163 / CBS 112.46 / NRRL 194 / M139) (Aspergillus nidulans), this protein is Glutathione S-transferase stcT.